The sequence spans 265 residues: Undecaprenyl-diphosphatase (265 aa).

8 helical membrane passes run 1-21 (MDWF…FLPI), 39-59 (QGLA…MMYY), 83-103 (LKLG…GFLG), 114-134 (ALVI…SDAF), 144-164 (LGVA…IPGT), 188-208 (SFLL…KDLI), 218-238 (MMAL…VFFI), and 244-264 (VGML…LFWL).

Belongs to the UppP family.

It localises to the cell inner membrane. It carries out the reaction di-trans,octa-cis-undecaprenyl diphosphate + H2O = di-trans,octa-cis-undecaprenyl phosphate + phosphate + H(+). Functionally, catalyzes the dephosphorylation of undecaprenyl diphosphate (UPP). Confers resistance to bacitracin. This is Undecaprenyl-diphosphatase from Alcanivorax borkumensis (strain ATCC 700651 / DSM 11573 / NCIMB 13689 / SK2).